The primary structure comprises 458 residues: Type III intermediate filament (458 aa).

A head region spans residues 1 to 100 (MEKGYKMNRS…KVNRTNEKAE (100 aa)). An IF rod domain is found at 97–405 (EKAEMIELND…KLLEGEENRI (309 aa)). Residues 406-458 (SMPLPSFGSMSLSDAMFEQQPFENRTSKKKIVIKTVETSGGDVISETTQKIED) form a tail region.

Belongs to the intermediate filament family.

The polypeptide is Type III intermediate filament (Tetronarce californica (Pacific electric ray)).